A 727-amino-acid polypeptide reads, in one-letter code: Testis anion transporter 1 (727 aa).

The Cytoplasmic segment spans residues 1–23 (MLTIFPFLEWMCMYRLKDWLLGD). A helical transmembrane segment spans residues 24-44 (LLAGISVGLVQVPQGLTLSLL). Residues 45 to 47 (ARQ) lie on the Extracellular side of the membrane. A helical membrane pass occupies residues 48–68 (LIPPLNIAYAAFCSSVIYVIF). Residues 69–74 (GSCHQM) are Cytoplasmic-facing. The chain crosses the membrane as a helical span at residues 75-95 (SIGSFFLVSALLINVLKISPL). Residues 96–130 (NNGHLVMGSFLKDEFSAPSYLMGYNKSLSVVATTT) are Extracellular-facing. An N-linked (GlcNAc...) asparagine glycan is attached at Asn120. Residues 131-151 (FLTGIIQLIMGVLGLGFIATY) traverse the membrane as a helical segment. The Cytoplasmic segment spans residues 152–160 (LPESAMSAY). Residues 161-181 (LAAVALHIMLSQLTCIFGIMI) form a helical membrane-spanning segment. Residues 182–198 (SFHAGPISFFYDIINYC) are Extracellular-facing. A helical membrane pass occupies residues 199-219 (VALPKANSTSILLFLTVVVAL). At 220-235 (RINKCIRISFNQYPIE) the chain is on the cytoplasmic side. A helical membrane pass occupies residues 236–256 (FPMELFLIIGFTVIGNKITMA). Residues 257–283 (TETSQTLIDMIPYSFLFPVTPDFSVLP) are Extracellular-facing. Residues 284-304 (KIILQAISLSLVSSFLLVFLG) traverse the membrane as a helical segment. Over 305–360 (KKIASLHNYSVNSNQDLIAIGLCNVVSSFFRSCVFTGAVARTIIQDKSGGRQQFAS) the chain is Cytoplasmic. A helical transmembrane segment spans residues 361-381 (LVGAGVMLLLMVKMGHFFYAL). The Extracellular portion of the chain corresponds to 382–383 (PN). A helical membrane pass occupies residues 384–404 (AVLAGIILSNVVPYLETISNL). Over 405-424 (PSLWRQDQYDCALWMMTFSS) the chain is Cytoplasmic. The chain crosses the membrane as a helical span at residues 425-445 (SIFLGLDIGLIISVVSAFFIT). At 446–727 (SVRSHRAKIL…LPSFHLQHIF (282 aa)) the chain is on the extracellular side. Residues 471-722 (DYREIITIPG…NSLSRLPSFH (252 aa)) form the STAS domain. The interval 592–727 (TVSSMSQKNQ…LPSFHLQHIF (136 aa)) is interaction with RACGAP1.

The protein belongs to the SLC26A/SulP transporter (TC 2.A.53) family. As to quaternary structure, interacts with RACGAP1. Interacts with CFTR; stimulates anion transport activity of CFTR. In terms of processing, N-glycosylated.

The protein localises to the membrane. It catalyses the reaction sulfate(out) + chloride(in) = sulfate(in) + chloride(out). It carries out the reaction oxalate(in) + chloride(out) = oxalate(out) + chloride(in). Antiporter that mediates the exchange of sulfate and oxalate against chloride ions across a membrane. Stimulates anion transport activity of CFTR. May cooperate with CFTR in the regulation of chloride and bicarbonate ions fluxes required for activation of the ADCY10/PKA pathway during sperm motility and sperm capacitation. May play a role in sperm tail differentiation and motility and hence male fertility. This Macaca fascicularis (Crab-eating macaque) protein is Testis anion transporter 1.